A 407-amino-acid chain; its full sequence is Argininosuccinate synthase (407 aa).

Residues 16 to 24 and A44 each bind ATP; that span reads AYSGGLDTS. Residues Y96 and S101 each contribute to the L-citrulline site. An ATP-binding site is contributed by G126. 3 residues coordinate L-aspartate: T128, N132, and D133. N132 provides a ligand contact to L-citrulline. L-citrulline contacts are provided by R136, S185, S194, E270, and Y282.

The protein belongs to the argininosuccinate synthase family. Type 1 subfamily. Homotetramer.

It is found in the cytoplasm. It carries out the reaction L-citrulline + L-aspartate + ATP = 2-(N(omega)-L-arginino)succinate + AMP + diphosphate + H(+). It functions in the pathway amino-acid biosynthesis; L-arginine biosynthesis; L-arginine from L-ornithine and carbamoyl phosphate: step 2/3. This Shewanella denitrificans (strain OS217 / ATCC BAA-1090 / DSM 15013) protein is Argininosuccinate synthase.